The following is a 1476-amino-acid chain: Coiled-coil domain-containing protein 88B (1476 aa).

The stretch at 253–481 (SHHLALQLAN…RGLLQVLQGQ (229 aa)) forms a coiled coil. 4 disordered regions span residues 427 to 451 (QRSLEPPPGSPGEAPLAGAAPSLQD), 509 to 706 (VAFD…EGAL), 825 to 866 (RRQW…ERRE), and 1323 to 1476 (LMRP…SLSQ). Ser-436 is modified (phosphoserine). Residues 572–586 (SDWSPQESGSPVETQ) are compositionally biased toward polar residues. A Phosphoserine modification is found at Ser-596. Composition is skewed to basic and acidic residues over residues 678–690 (EAREHDQRLEGTV), 825–834 (RRQWEREGSR), and 842–866 (AEERMQVLESEGRQHLEEAERERRE). Residues 720 to 1303 (LASGVAEQEA…KIMDQYRVLE (584 aa)) are a coiled coil. Ser-1348 and Ser-1379 each carry phosphoserine. Over residues 1448–1469 (LQEHETDANREGPEVQEPEKRP) the composition is skewed to basic and acidic residues.

Belongs to the CCDC88 family. As to quaternary structure, homodimer. Interacts with DOCK8. Interacts (via C-terminus) with intact microtubules. Interacts with dynein-dynactin motor complex. Interacts (via C-terminus) with HSPA5. In terms of tissue distribution, expressed in endothelium (at protein level). Expressed in NK cells (at protein level).

The protein localises to the membrane. It localises to the cytoplasm. The protein resides in the cytoskeleton. Its subcellular location is the microtubule organizing center. It is found in the endoplasmic reticulum. The protein localises to the golgi apparatus. Its function is as follows. Acts as a positive regulator of T-cell maturation and inflammatory function. Required for several functions of T-cells, in both the CD4(+) and the CD8(+) compartments and this includes expression of cell surface markers of activation, proliferation, and cytokine production in response to specific or non-specific stimulation. Enhances NK cell cytotoxicity by positively regulating polarization of microtubule-organizing center (MTOC) to cytotoxic synapse, lytic granule transport along microtubules, and dynein-mediated clustering to MTOC. Interacts with HSPA5 and stabilizes the interaction between HSPA5 and ERN1, leading to suppression of ERN1-induced JNK activation and endoplasmic reticulum stress-induced apoptosis. In Homo sapiens (Human), this protein is Coiled-coil domain-containing protein 88B (CCDC88B).